The primary structure comprises 322 residues: Quinolinate synthase (322 aa).

Residues histidine 36 and serine 53 each contribute to the iminosuccinate site. Cysteine 98 contributes to the [4Fe-4S] cluster binding site. Iminosuccinate-binding positions include 124–126 (YIN) and serine 141. A [4Fe-4S] cluster-binding site is contributed by cysteine 184. Residues 210-212 (HPE) and threonine 227 contribute to the iminosuccinate site. Residue cysteine 278 participates in [4Fe-4S] cluster binding.

Belongs to the quinolinate synthase family. Type 2 subfamily. It depends on [4Fe-4S] cluster as a cofactor.

The protein localises to the cytoplasm. The catalysed reaction is iminosuccinate + dihydroxyacetone phosphate = quinolinate + phosphate + 2 H2O + H(+). It functions in the pathway cofactor biosynthesis; NAD(+) biosynthesis; quinolinate from iminoaspartate: step 1/1. Functionally, catalyzes the condensation of iminoaspartate with dihydroxyacetone phosphate to form quinolinate. The polypeptide is Quinolinate synthase (Chloroherpeton thalassium (strain ATCC 35110 / GB-78)).